The following is a 105-amino-acid chain: Diuretic hormone class 2 (105 aa).

Positions 1 to 23 (MTVLCTLMAFVMVVAISSLTVDA) are cleaved as a signal peptide. Positions 24 to 63 (IPHSHESYWDQQDDIDRDEFLELLSRLSRTVMNRPEMENS) are excised as a propeptide. Pro-96 bears the Proline amide mark. The propeptide occupies 101-105 (RSEQA).

In terms of tissue distribution, expressed in central brain, antennal lobes, retrocerebral complex and gnathal, thoracic and abdominal ganglia but not in optical lobes (at protein level).

It is found in the secreted. Functionally, regulation of fluid secretion. Stimulates Malpighian tubules fluid secretion. The sequence is that of Diuretic hormone class 2 from Camponotus floridanus (Florida carpenter ant).